A 377-amino-acid chain; its full sequence is DNA-directed RNA polymerase subunit alpha (377 aa).

The alpha N-terminal domain (alpha-NTD) stretch occupies residues 1–259 (MSDSSHNLLY…KHFSVFEKMD (259 aa)). The alpha C-terminal domain (alpha-CTD) stretch occupies residues 276–377 (KDDILHKLVL…KIRSSKNTKG (102 aa)).

The protein belongs to the RNA polymerase alpha chain family. Homodimer. The RNAP catalytic core consists of 2 alpha, 1 beta, 1 beta' and 1 omega subunit. When a sigma factor is associated with the core the holoenzyme is formed, which can initiate transcription.

The catalysed reaction is RNA(n) + a ribonucleoside 5'-triphosphate = RNA(n+1) + diphosphate. Its function is as follows. DNA-dependent RNA polymerase catalyzes the transcription of DNA into RNA using the four ribonucleoside triphosphates as substrates. The chain is DNA-directed RNA polymerase subunit alpha from Chlamydia trachomatis serovar D (strain ATCC VR-885 / DSM 19411 / UW-3/Cx).